The chain runs to 701 residues: Elongation factor G 2 (701 aa).

A tr-type G domain is found at 8-290 (ERYRNIGISA…AVIDYLPSPA (283 aa)). GTP-binding positions include 17–24 (AHIDAGKT), 88–92 (DTPGH), and 142–145 (NKMD).

This sequence belongs to the TRAFAC class translation factor GTPase superfamily. Classic translation factor GTPase family. EF-G/EF-2 subfamily.

Its subcellular location is the cytoplasm. Catalyzes the GTP-dependent ribosomal translocation step during translation elongation. During this step, the ribosome changes from the pre-translocational (PRE) to the post-translocational (POST) state as the newly formed A-site-bound peptidyl-tRNA and P-site-bound deacylated tRNA move to the P and E sites, respectively. Catalyzes the coordinated movement of the two tRNA molecules, the mRNA and conformational changes in the ribosome. This is Elongation factor G 2 from Cupriavidus pinatubonensis (strain JMP 134 / LMG 1197) (Cupriavidus necator (strain JMP 134)).